Consider the following 286-residue polypeptide: Diaminopimelate epimerase (286 aa).

Residues asparagine 12 and asparagine 67 each contribute to the substrate site. Residue cysteine 76 is the Proton donor of the active site. Substrate contacts are provided by residues 77–78, asparagine 165, asparagine 198, and 216–217; these read GN and ER. Cysteine 225 (proton acceptor) is an active-site residue. Position 226-227 (226-227) interacts with substrate; it reads GT.

Belongs to the diaminopimelate epimerase family. In terms of assembly, homodimer.

The protein resides in the cytoplasm. The enzyme catalyses (2S,6S)-2,6-diaminopimelate = meso-2,6-diaminopimelate. Its pathway is amino-acid biosynthesis; L-lysine biosynthesis via DAP pathway; DL-2,6-diaminopimelate from LL-2,6-diaminopimelate: step 1/1. Catalyzes the stereoinversion of LL-2,6-diaminopimelate (L,L-DAP) to meso-diaminopimelate (meso-DAP), a precursor of L-lysine. This Methanothermobacter thermautotrophicus (strain ATCC 29096 / DSM 1053 / JCM 10044 / NBRC 100330 / Delta H) (Methanobacterium thermoautotrophicum) protein is Diaminopimelate epimerase.